The chain runs to 58 residues: Small ribosomal subunit protein bS21 (58 aa).

The disordered stretch occupies residues 37–58; it reads FYEKPSVKRKRKSEAARKRKKF. The segment covering 43 to 58 has biased composition (basic residues); it reads VKRKRKSEAARKRKKF.

It belongs to the bacterial ribosomal protein bS21 family.

The polypeptide is Small ribosomal subunit protein bS21 (Streptococcus sanguinis (strain SK36)).